The sequence spans 57 residues: Andropin (57 aa).

An N-terminal signal peptide occupies residues 1 to 23 (MKYFVVLVVLALILAITVGPSDA).

The protein belongs to the andropin family. In terms of tissue distribution, ejaculatory duct of adult males.

The protein resides in the secreted. Male-specific peptide with moderate activity against Gram-positive bacteria. The chain is Andropin (Anp) from Drosophila mauritiana (Fruit fly).